A 184-amino-acid chain; its full sequence is ADP-ribosylation factor-like protein 2 (184 aa).

Gly-2 is lipidated: N-myristoyl glycine. Residues 23–30 (GLDNAGKT), 66–70 (DVGGQ), Gly-68, and 125–128 (NKSD) contribute to the GTP site.

This sequence belongs to the small GTPase superfamily. Arf family.

It is found in the cytoplasm. Its subcellular location is the cell membrane. The protein resides in the cytoskeleton. The protein localises to the microtubule organizing center. It localises to the centrosome. Functionally, GTP-binding protein that functions in embryogenesis, cytokinesis, germline development and microtubulule cytoskeleton dynamics. This chain is ADP-ribosylation factor-like protein 2 (evl-20.1), found in Caenorhabditis briggsae.